We begin with the raw amino-acid sequence, 348 residues long: Histidinol-phosphate aminotransferase (348 aa).

K211 is subject to N6-(pyridoxal phosphate)lysine.

The protein belongs to the class-II pyridoxal-phosphate-dependent aminotransferase family. Histidinol-phosphate aminotransferase subfamily. Homodimer. The cofactor is pyridoxal 5'-phosphate.

It carries out the reaction L-histidinol phosphate + 2-oxoglutarate = 3-(imidazol-4-yl)-2-oxopropyl phosphate + L-glutamate. It participates in amino-acid biosynthesis; L-histidine biosynthesis; L-histidine from 5-phospho-alpha-D-ribose 1-diphosphate: step 7/9. The polypeptide is Histidinol-phosphate aminotransferase (Chlorobaculum tepidum (strain ATCC 49652 / DSM 12025 / NBRC 103806 / TLS) (Chlorobium tepidum)).